We begin with the raw amino-acid sequence, 388 residues long: Sulfate adenylyltransferase (388 aa).

This sequence belongs to the sulfate adenylyltransferase family.

The catalysed reaction is sulfate + ATP + H(+) = adenosine 5'-phosphosulfate + diphosphate. It participates in sulfur metabolism; hydrogen sulfide biosynthesis; sulfite from sulfate: step 1/3. This Acaryochloris marina (strain MBIC 11017) protein is Sulfate adenylyltransferase.